The chain runs to 182 residues: Ribosome maturation factor RimM (182 aa).

A PRC barrel domain is found at E103–F182.

Belongs to the RimM family. Binds ribosomal protein uS19.

The protein resides in the cytoplasm. An accessory protein needed during the final step in the assembly of 30S ribosomal subunit, possibly for assembly of the head region. Essential for efficient processing of 16S rRNA. May be needed both before and after RbfA during the maturation of 16S rRNA. It has affinity for free ribosomal 30S subunits but not for 70S ribosomes. The chain is Ribosome maturation factor RimM from Vibrio cholerae serotype O1 (strain ATCC 39315 / El Tor Inaba N16961).